A 95-amino-acid chain; its full sequence is Aspartyl/glutamyl-tRNA(Asn/Gln) amidotransferase subunit C (95 aa).

The protein belongs to the GatC family. In terms of assembly, heterotrimer of A, B and C subunits.

The catalysed reaction is L-glutamyl-tRNA(Gln) + L-glutamine + ATP + H2O = L-glutaminyl-tRNA(Gln) + L-glutamate + ADP + phosphate + H(+). It catalyses the reaction L-aspartyl-tRNA(Asn) + L-glutamine + ATP + H2O = L-asparaginyl-tRNA(Asn) + L-glutamate + ADP + phosphate + 2 H(+). Allows the formation of correctly charged Asn-tRNA(Asn) or Gln-tRNA(Gln) through the transamidation of misacylated Asp-tRNA(Asn) or Glu-tRNA(Gln) in organisms which lack either or both of asparaginyl-tRNA or glutaminyl-tRNA synthetases. The reaction takes place in the presence of glutamine and ATP through an activated phospho-Asp-tRNA(Asn) or phospho-Glu-tRNA(Gln). In Bartonella bacilliformis (strain ATCC 35685 / KC583 / Herrer 020/F12,63), this protein is Aspartyl/glutamyl-tRNA(Asn/Gln) amidotransferase subunit C.